We begin with the raw amino-acid sequence, 534 residues long: Cytochrome P450 monooxygenase AN1598 (534 aa).

Residue Asn3 is glycosylated (N-linked (GlcNAc...) asparagine). A helical membrane pass occupies residues 25–45 (LYLEILGVLSVVYLLQTLVAY). A glycan (N-linked (GlcNAc...) asparagine) is linked at Asn95. Heme is bound at residue Cys464. N-linked (GlcNAc...) asparagine glycosylation is present at Asn498.

Belongs to the cytochrome P450 family. Heme serves as cofactor.

It localises to the membrane. Its pathway is secondary metabolite biosynthesis; terpenoid biosynthesis. Its function is as follows. Bifunctional terpene synthase; part of the gene cluster that mediates the biosynthesis of the diterpene ent-pimara-8(14),15-diene (PD). Within the cluster, the HMG-CoA reductase AN1593 functions in the mevalonate pathway, which produces isoprenoid precursors. The geranylgeranyl pyrophosphate (GGPP) synthase AN1592 is needed in the formation of GGPP, the precursor for diterpenes. Lastly, the pimaradiene synthase pbcA performs the 2 cyclization steps that convert GGPP to ent-pimara-8(14),15-diene. The putative roles of the remaining cluster enzymes in ent-pimara-8(14),15-diene biosynthesis is unclear. The cytochrome P450 monooxygenase AN1598, the glutathione S-transferase AN1595, the oxidoreductases AN1596 and AN1597 probably function as decorative enzymes. It is possible that in biological conditions the compound is oxidized to ent-pimara-8(14),15-dien-19-oic acid, which is a bioactive diterpene compound predominant in many plant extracts. This Emericella nidulans (strain FGSC A4 / ATCC 38163 / CBS 112.46 / NRRL 194 / M139) (Aspergillus nidulans) protein is Cytochrome P450 monooxygenase AN1598.